We begin with the raw amino-acid sequence, 125 residues long: Transposase C from transposon PsiTn554 (125 aa).

The protein is Transposase C from transposon PsiTn554 (tnpC) of Staphylococcus aureus.